The chain runs to 570 residues: Urease subunit alpha (570 aa).

In terms of domain architecture, Urease spans 131–570; it reads GGMDSHIHFI…LPMAQRYFLF (440 aa). 3 residues coordinate Ni(2+): histidine 136, histidine 138, and lysine 219. Lysine 219 bears the N6-carboxylysine mark. Substrate is bound at residue histidine 221. Residues histidine 248 and histidine 274 each coordinate Ni(2+). Histidine 322 functions as the Proton donor in the catalytic mechanism. Aspartate 362 provides a ligand contact to Ni(2+).

It belongs to the metallo-dependent hydrolases superfamily. Urease alpha subunit family. In terms of assembly, heterotrimer of UreA (gamma), UreB (beta) and UreC (alpha) subunits. Three heterotrimers associate to form the active enzyme. Ni cation is required as a cofactor. Post-translationally, carboxylation allows a single lysine to coordinate two nickel ions.

It localises to the cytoplasm. It carries out the reaction urea + 2 H2O + H(+) = hydrogencarbonate + 2 NH4(+). The protein operates within nitrogen metabolism; urea degradation; CO(2) and NH(3) from urea (urease route): step 1/1. This Allorhizobium ampelinum (strain ATCC BAA-846 / DSM 112012 / S4) (Agrobacterium vitis (strain S4)) protein is Urease subunit alpha.